The primary structure comprises 180 residues: Acireductone dioxygenase (180 aa).

4 residues coordinate Fe(2+): histidine 99, histidine 101, glutamate 105, and histidine 145. Ni(2+) contacts are provided by histidine 99, histidine 101, glutamate 105, and histidine 145.

It belongs to the acireductone dioxygenase (ARD) family. In terms of assembly, monomer. It depends on Fe(2+) as a cofactor. Ni(2+) is required as a cofactor.

It carries out the reaction 1,2-dihydroxy-5-(methylsulfanyl)pent-1-en-3-one + O2 = 3-(methylsulfanyl)propanoate + CO + formate + 2 H(+). The catalysed reaction is 1,2-dihydroxy-5-(methylsulfanyl)pent-1-en-3-one + O2 = 4-methylsulfanyl-2-oxobutanoate + formate + 2 H(+). Its pathway is amino-acid biosynthesis; L-methionine biosynthesis via salvage pathway; L-methionine from S-methyl-5-thio-alpha-D-ribose 1-phosphate: step 5/6. In terms of biological role, catalyzes 2 different reactions between oxygen and the acireductone 1,2-dihydroxy-3-keto-5-methylthiopentene (DHK-MTPene) depending upon the metal bound in the active site. Fe-containing acireductone dioxygenase (Fe-ARD) produces formate and 2-keto-4-methylthiobutyrate (KMTB), the alpha-ketoacid precursor of methionine in the methionine recycle pathway. Ni-containing acireductone dioxygenase (Ni-ARD) produces methylthiopropionate, carbon monoxide and formate, and does not lie on the methionine recycle pathway. In Geobacillus thermodenitrificans (strain NG80-2), this protein is Acireductone dioxygenase.